Consider the following 116-residue polypeptide: Calcium-regulated OB-fold protein CarO (116 aa).

A signal peptide spans 1 to 21 (MKLRHLPLIAAIGLFSTVTLA).

It localises to the periplasm. In terms of biological role, plays a role in intracellular Ca(2+) homeostasis. Involved in cell protection against oxidative stress in strain 25W. This is Calcium-regulated OB-fold protein CarO from Pseudomonas aeruginosa (strain ATCC 15692 / DSM 22644 / CIP 104116 / JCM 14847 / LMG 12228 / 1C / PRS 101 / PAO1).